Here is a 94-residue protein sequence, read N- to C-terminus: Large ribosomal subunit protein bL25 (94 aa).

The protein belongs to the bacterial ribosomal protein bL25 family. Part of the 50S ribosomal subunit; part of the 5S rRNA/L5/L18/L25 subcomplex. Contacts the 5S rRNA. Binds to the 5S rRNA independently of L5 and L18.

In terms of biological role, this is one of the proteins that binds to the 5S RNA in the ribosome where it forms part of the central protuberance. This is Large ribosomal subunit protein bL25 from Serratia proteamaculans (strain 568).